The sequence spans 86 residues: CLAVATA3/ESR (CLE)-related protein 8 (86 aa).

Positions 1 to 24 (MKVLKRDSMLLLITLYFLLTTSMA) are cleaved as a signal peptide. The interval 43-86 (DLKQNKAKPHLPNLFRTMRRVPTGPNPLHHISPPQPGSLNYARN) is disordered. Hydroxyproline is present on residues P64 and P67. A glycan (O-linked (Ara...) hydroxyproline) is linked at P67.

This sequence belongs to the CLV3/ESR signal peptide family. Post-translationally, the O-glycosylation (arabinosylation) of the hydroxyproline Pro-67 enhances binding affinity of the CLE8p peptide for its receptor. As to expression, mostly expressed in siliques, and, to a lower extent, in flowers. Expressed in young embryos and endosperm.

The protein resides in the secreted. It is found in the extracellular space. Extracellular signal peptide that regulates cell fate. Represses root apical meristem maintenance. Positively regulates the expression of the transcription factor WOX8 and thus, regulates early embryo development. Regulates the transition of protophloem cells from proliferation to differentiation, thus impinging on postembryonic growth capacity of the root meristem; this signaling pathway requires CRN and CLV2. The chain is CLAVATA3/ESR (CLE)-related protein 8 from Arabidopsis thaliana (Mouse-ear cress).